A 192-amino-acid chain; its full sequence is Peptidyl-tRNA hydrolase (192 aa).

Residue Y17 coordinates tRNA. Catalysis depends on H22, which acts as the Proton acceptor. TRNA is bound by residues F67, N69, and N115.

The protein belongs to the PTH family. Monomer.

It is found in the cytoplasm. The catalysed reaction is an N-acyl-L-alpha-aminoacyl-tRNA + H2O = an N-acyl-L-amino acid + a tRNA + H(+). Its function is as follows. Hydrolyzes ribosome-free peptidyl-tRNAs (with 1 or more amino acids incorporated), which drop off the ribosome during protein synthesis, or as a result of ribosome stalling. Catalyzes the release of premature peptidyl moieties from peptidyl-tRNA molecules trapped in stalled 50S ribosomal subunits, and thus maintains levels of free tRNAs and 50S ribosomes. In Methylobacillus flagellatus (strain ATCC 51484 / DSM 6875 / VKM B-1610 / KT), this protein is Peptidyl-tRNA hydrolase.